The primary structure comprises 1083 residues: Error-prone DNA polymerase (1083 aa).

Belongs to the DNA polymerase type-C family. DnaE2 subfamily.

It localises to the cytoplasm. The catalysed reaction is DNA(n) + a 2'-deoxyribonucleoside 5'-triphosphate = DNA(n+1) + diphosphate. In terms of biological role, DNA polymerase involved in damage-induced mutagenesis and translesion synthesis (TLS). It is not the major replicative DNA polymerase. The polypeptide is Error-prone DNA polymerase (Xanthomonas axonopodis pv. citri (strain 306)).